The following is a 116-amino-acid chain: Non-specific lipid-transfer protein (116 aa).

Residues 1 to 25 form the signal peptide; sequence MAKMAMMVLCAGVTCMVVGAPYTEA. Intrachain disulfides connect Cys-28–Cys-75, Cys-38–Cys-52, Cys-53–Cys-98, and Cys-73–Cys-112.

Belongs to the plant LTP family.

Functionally, plant non-specific lipid-transfer proteins transfer phospholipids as well as galactolipids across membranes. May play a role in wax or cutin deposition in the cell walls of expanding epidermal cells and certain secretory tissues. The protein is Non-specific lipid-transfer protein of Helianthus annuus (Common sunflower).